Reading from the N-terminus, the 89-residue chain is Small ribosomal subunit protein uS15 (89 aa).

Belongs to the universal ribosomal protein uS15 family. In terms of assembly, part of the 30S ribosomal subunit. Forms a bridge to the 50S subunit in the 70S ribosome, contacting the 23S rRNA.

Its function is as follows. One of the primary rRNA binding proteins, it binds directly to 16S rRNA where it helps nucleate assembly of the platform of the 30S subunit by binding and bridging several RNA helices of the 16S rRNA. Forms an intersubunit bridge (bridge B4) with the 23S rRNA of the 50S subunit in the ribosome. In Sulfurovum sp. (strain NBC37-1), this protein is Small ribosomal subunit protein uS15.